A 158-amino-acid chain; its full sequence is Endoribonuclease YbeY (158 aa).

Zn(2+)-binding residues include H119, H123, and D129.

This sequence belongs to the endoribonuclease YbeY family. Zn(2+) serves as cofactor.

The protein localises to the cytoplasm. In terms of biological role, single strand-specific metallo-endoribonuclease involved in late-stage 70S ribosome quality control and in maturation of the 3' terminus of the 16S rRNA. The protein is Endoribonuclease YbeY of Chlamydia felis (strain Fe/C-56) (Chlamydophila felis).